We begin with the raw amino-acid sequence, 137 residues long: Small ribosomal subunit protein uS9 (137 aa).

The tract at residues 105–137 (LKTEGYLKRDPRAVERKKYGLRKARKAPQYSKR) is disordered. A compositionally biased stretch (basic and acidic residues) spans 109–122 (GYLKRDPRAVERKK). Positions 123–137 (YGLRKARKAPQYSKR) are enriched in basic residues.

The protein belongs to the universal ribosomal protein uS9 family.

In Synechococcus sp. (strain JA-3-3Ab) (Cyanobacteria bacterium Yellowstone A-Prime), this protein is Small ribosomal subunit protein uS9.